Here is a 188-residue protein sequence, read N- to C-terminus: Succinate dehydrogenase [ubiquinone] cytochrome b large subunit, mitochondrial (188 aa).

Residues Met1–Val31 constitute a mitochondrion transit peptide. Residues Ser32–Trp69 are Mitochondrial matrix-facing. A helical transmembrane segment spans residues Met70–Val95. A rhodoquinol is bound by residues Ser72 and Arg76. A ubiquinone is bound by residues Ser72 and Arg76. Over Leu96 to Pro113 the chain is Mitochondrial intermembrane. Residues Trp114 to Gly140 traverse the membrane as a helical segment. His131 provides a ligand contact to heme b. The Mitochondrial matrix portion of the chain corresponds to Phe141–Tyr153. The chain crosses the membrane as a helical span at residues Arg154–Trp176. The Mitochondrial intermembrane portion of the chain corresponds to Glu177–His188.

It belongs to the cytochrome b558 family. As to quaternary structure, component of the mitochondrial electron transport chain complex II composed of four subunits: a flavoprotein (Fp), an iron-sulfur protein (Ip), and a large cytochrome b (CybL) subunit and a small cytochrome b (CybS) subunit. There are 2 developmental stage-specific forms of complex II which have the Ip and CybL subunits in common. Complex II from the free-living larvae (aerobic environment) acts as a succinate dehydrogenase and is composed of the common subunit Ip and CybL and the stage specific subunits FpL and CybSL. Complex II from parasitic larvae and adults (anaerobic environment) acts as a fumarate reductase and is composed of the common subunit Ip and CybL and the stage specific subunits FpA and CybSA. Requires heme b as cofactor. In terms of tissue distribution, expressed in adult muscles (at protein level).

Its subcellular location is the mitochondrion inner membrane. It participates in carbohydrate metabolism; tricarboxylic acid cycle; fumarate from succinate (eukaryal route): step 1/1. Membrane-bound large subunit (CybL) of the mitochondrial electron transport chain complex II, which together with the membrane-bound small subunit (CybS), anchor the catalytic subunits to the inner mitochondria membrane. During the free-living egg-larvae stages, which occur in an aerobic environment, complex II acts as a succinate dehydrogenase by transferring electrons from succinate to ubiquinone. During the parasitic larvae and adult stages, which occur in an anaerobic environment, complex II acts as a fumarate reductase by transferring electrons from rhodoquinol to fumarate. The sequence is that of Succinate dehydrogenase [ubiquinone] cytochrome b large subunit, mitochondrial from Ascaris suum (Pig roundworm).